Here is an 80-residue protein sequence, read N- to C-terminus: Putative antitoxin VapB44 (80 aa).

The disordered stretch occupies residues 40 to 68 (NQNPQPAASQEDAFHGFEPLPHRGGAVSN).

Functionally, possibly the antitoxin component of a type II toxin-antitoxin (TA) system. Its cognate toxin is VapC44 (Potential). The protein is Putative antitoxin VapB44 (vapB44) of Mycobacterium tuberculosis (strain CDC 1551 / Oshkosh).